A 308-amino-acid chain; its full sequence is Growth/differentiation factor 15 (308 aa).

Residues 1 to 29 (MPGQELRTVNGSQMLLVLLVLSWLPHGGA) form the signal peptide. Positions 30–194 (LSLAEASRAS…RPQAARGRRR (165 aa)) are excised as a propeptide. An N-linked (GlcNAc...) asparagine glycan is attached at Asn70. The disordered stretch occupies residues 152–177 (APALHLRLSPPPSQSDQLLAESSSAR). Residues 165–177 (QSDQLLAESSSAR) show a composition bias toward polar residues. 4 disulfides stabilise this stretch: Cys203/Cys210, Cys211/Cys274, Cys240/Cys305, and Cys244/Cys307.

This sequence belongs to the TGF-beta family. In terms of assembly, homodimer; disulfide-linked. Interacts with GFRAL and RET; ligand of GFRAL, which mediates GDF15 internalization and cellular signaling through interaction with RET via the formation of a 2:2:2 ternary complex composed of GDF15, GFRAL and RET. Detected in plasma (at protein level). Highly expressed in placenta, with lower levels in prostate and colon and some expression in kidney.

The protein localises to the secreted. In terms of biological role, hormone produced in response to various stresses to confer information about those stresses to the brain, and trigger an aversive response, characterized by nausea, vomiting, and/or loss of appetite. The aversive response is both required to reduce continuing exposure to those stresses at the time of exposure and to promote avoidance behavior in the future. Acts by binding to its receptor, GFRAL, activating GFRAL-expressing neurons localized in the area postrema and nucleus tractus solitarius of the brainstem. It then triggers the activation of neurons localized within the parabrachial nucleus and central amygdala, which constitutes part of the 'emergency circuit' that shapes responses to stressful conditions. The GDF15-GFRAL signal induces expression of genes involved in metabolism, such as lipid metabolism in adipose tissues. Required for avoidance behavior in response to food allergens: induced downstream of mast cell activation to promote aversion and minimize harmful effects of exposure to noxious substances. In addition to suppress appetite, also promotes weight loss by enhancing energy expenditure in muscle: acts by increasing calcium futile cycling in muscle. Contributes to the effect of metformin, an anti-diabetic drug, on appetite reduction and weight loss: produced in the kidney in response to metformin treatment, thereby activating the GDF15-GFRAL response, leading to reduced appetite and weight. The contribution of GDF15 to weight loss following metformin treatment is however limited and subject to discussion. Produced in response to anticancer drugs, such as camptothecin or cisplatin, promoting nausea, vomiting and contributing to malnutrition. Overproduced in many cancers, promoting anorexia in cancer (cachexia). Responsible for the risk of nausea and vomiting during pregnancy: high levels of GDF15 during pregnancy, mostly originating from the fetus, are associated with increased nausea and vomiting. Maternal sensitivity to nausea is probably determined by pre-pregnancy exposure to GDF15, women with naturally high level of GDF15 being less susceptible to nausea than women with low levels of GDF15 before pregnancy. Promotes metabolic adaptation in response to systemic inflammation caused by bacterial and viral infections in order to promote tissue tolerance and prevent tissue damage. Required for tissue tolerance in response to myocardial infarction by acting as an inhibitor of leukocyte integring activation, thereby protecting against cardiac rupture. Inhibits growth hormone signaling on hepatocytes. In Homo sapiens (Human), this protein is Growth/differentiation factor 15.